We begin with the raw amino-acid sequence, 369 residues long: Anhydro-N-acetylmuramic acid kinase (369 aa).

Position 12–19 (12–19 (GTSMDGVD)) interacts with ATP.

It belongs to the anhydro-N-acetylmuramic acid kinase family.

It catalyses the reaction 1,6-anhydro-N-acetyl-beta-muramate + ATP + H2O = N-acetyl-D-muramate 6-phosphate + ADP + H(+). The protein operates within amino-sugar metabolism; 1,6-anhydro-N-acetylmuramate degradation. It participates in cell wall biogenesis; peptidoglycan recycling. In terms of biological role, catalyzes the specific phosphorylation of 1,6-anhydro-N-acetylmuramic acid (anhMurNAc) with the simultaneous cleavage of the 1,6-anhydro ring, generating MurNAc-6-P. Is required for the utilization of anhMurNAc either imported from the medium or derived from its own cell wall murein, and thus plays a role in cell wall recycling. This is Anhydro-N-acetylmuramic acid kinase from Shewanella putrefaciens (strain CN-32 / ATCC BAA-453).